Consider the following 307-residue polypeptide: Nitrogenase iron protein 2 (307 aa).

13-20 contacts ATP; it reads GKGGIGKS. Residue Cys-101 participates in [4Fe-4S] cluster binding. Arg-104 carries the post-translational modification ADP-ribosylarginine; by dinitrogenase reductase ADP-ribosyltransferase. Cys-135 serves as a coordination point for [4Fe-4S] cluster. The disordered stretch occupies residues 285-307; it reads QLTETDKAAKESEKKQEDAEGEA.

The protein belongs to the NifH/BchL/ChlL family. Homodimer. The cofactor is [4Fe-4S] cluster. In terms of processing, the reversible ADP-ribosylation of Arg-104 inactivates the nitrogenase reductase and regulates nitrogenase activity.

It carries out the reaction N2 + 8 reduced [2Fe-2S]-[ferredoxin] + 16 ATP + 16 H2O = H2 + 8 oxidized [2Fe-2S]-[ferredoxin] + 2 NH4(+) + 16 ADP + 16 phosphate + 6 H(+). In terms of biological role, the key enzymatic reactions in nitrogen fixation are catalyzed by the nitrogenase complex, which has 2 components: the iron protein and the molybdenum-iron protein. This Mastigocladus laminosus (Fischerella sp.) protein is Nitrogenase iron protein 2 (nifH2).